A 495-amino-acid chain; its full sequence is UPF0371 protein cgR_2887 (495 aa).

Belongs to the UPF0371 family.

In Corynebacterium glutamicum (strain R), this protein is UPF0371 protein cgR_2887.